Reading from the N-terminus, the 1390-residue chain is DNA-directed RNA polymerase subunit beta (1390 aa).

Residues 556-576 (KLADQDAENDPDSDLGTKSSN) are disordered.

The protein belongs to the RNA polymerase beta chain family. In terms of assembly, the RNAP catalytic core consists of 2 alpha, 1 beta, 1 beta' and 1 omega subunit. When a sigma factor is associated with the core the holoenzyme is formed, which can initiate transcription.

It catalyses the reaction RNA(n) + a ribonucleoside 5'-triphosphate = RNA(n+1) + diphosphate. Functionally, DNA-dependent RNA polymerase catalyzes the transcription of DNA into RNA using the four ribonucleoside triphosphates as substrates. In Mycoplasmoides gallisepticum (strain R(low / passage 15 / clone 2)) (Mycoplasma gallisepticum), this protein is DNA-directed RNA polymerase subunit beta.